Here is a 298-residue protein sequence, read N- to C-terminus: DNA repair protein RecO (298 aa).

Belongs to the RecO family.

Involved in DNA repair and RecF pathway recombination. The chain is DNA repair protein RecO from Cupriavidus metallidurans (strain ATCC 43123 / DSM 2839 / NBRC 102507 / CH34) (Ralstonia metallidurans).